A 157-amino-acid chain; its full sequence is 2-C-methyl-D-erythritol 2,4-cyclodiphosphate synthase (157 aa).

A divalent metal cation-binding residues include aspartate 8 and histidine 10. Residues 8–10 (DVH) and 34–35 (HS) contribute to the 4-CDP-2-C-methyl-D-erythritol 2-phosphate site. Histidine 42 contacts a divalent metal cation. Residues 56-58 (DIG), 61-65 (FPDTD), 100-106 (AQAPKMA), 132-135 (TTTE), phenylalanine 139, and arginine 142 contribute to the 4-CDP-2-C-methyl-D-erythritol 2-phosphate site.

The protein belongs to the IspF family. Homotrimer. Requires a divalent metal cation as cofactor.

It carries out the reaction 4-CDP-2-C-methyl-D-erythritol 2-phosphate = 2-C-methyl-D-erythritol 2,4-cyclic diphosphate + CMP. It functions in the pathway isoprenoid biosynthesis; isopentenyl diphosphate biosynthesis via DXP pathway; isopentenyl diphosphate from 1-deoxy-D-xylulose 5-phosphate: step 4/6. In terms of biological role, involved in the biosynthesis of isopentenyl diphosphate (IPP) and dimethylallyl diphosphate (DMAPP), two major building blocks of isoprenoid compounds. Catalyzes the conversion of 4-diphosphocytidyl-2-C-methyl-D-erythritol 2-phosphate (CDP-ME2P) to 2-C-methyl-D-erythritol 2,4-cyclodiphosphate (ME-CPP) with a corresponding release of cytidine 5-monophosphate (CMP). The chain is 2-C-methyl-D-erythritol 2,4-cyclodiphosphate synthase from Pseudomonas paraeruginosa (strain DSM 24068 / PA7) (Pseudomonas aeruginosa (strain PA7)).